The chain runs to 708 residues: Glycine--tRNA ligase beta subunit (708 aa).

It belongs to the class-II aminoacyl-tRNA synthetase family. In terms of assembly, tetramer of two alpha and two beta subunits.

It localises to the cytoplasm. The catalysed reaction is tRNA(Gly) + glycine + ATP = glycyl-tRNA(Gly) + AMP + diphosphate. This Paracidovorax citrulli (strain AAC00-1) (Acidovorax citrulli) protein is Glycine--tRNA ligase beta subunit.